The chain runs to 271 residues: Aquaporin-2 (271 aa).

At 1 to 11 (MWELRSIAFSR) the chain is on the cytoplasmic side. Residues 12-32 (AVLAEFLATLLFVFFGLGSAL) traverse the membrane as a helical segment. The Extracellular segment spans residues 33–40 (NWPQALPS). A helical membrane pass occupies residues 41–59 (VLQIAMAFGLAIGTLVQAL). At 60-64 (GHVSG) the chain is on the cytoplasmic side. The segment at residues 65 to 74 (AHINPAVTVA) is an intramembrane region (discontinuously helical). The NPA 1 motif lies at 68–70 (NPA). The Cytoplasmic portion of the chain corresponds to 75 to 85 (CLVGCHVSFLR). Residues 86 to 107 (AVFYVAAQLLGAVAGAALLHEI) traverse the membrane as a helical segment. The Extracellular segment spans residues 108-127 (TPPAIRGDLAVNALNNNSTA). N-linked (GlcNAc...) asparagine glycosylation is present at N123. The helical transmembrane segment at 128–148 (GQAVTVELFLTLQLVLCIFAS) threads the bilayer. Topologically, residues 149 to 156 (TDERRGDN) are cytoplasmic. Residues 157-176 (VGTPALSIGFSVALGHLLGI) traverse the membrane as a helical segment. Residues 177 to 180 (HYTG) lie on the Extracellular side of the membrane. The discontinuously helical intramembrane region spans 181-193 (CSMNPARSLAPAI). The NPA 2 signature appears at 184-186 (NPA). Residues 194–201 (VTGKFDDH) are Extracellular-facing. The chain crosses the membrane as a helical span at residues 202–222 (WVFWIGPLVGAIVASLLYNYV). At 223–271 (LFPPAKSLSERLAVLKGLEPDTDWEEREVRRRQSVELHSPQSLPRGSKA) the chain is on the cytoplasmic side. Positions 251–271 (VRRRQSVELHSPQSLPRGSKA) are disordered. S256 is subject to Phosphoserine. A compositionally biased stretch (polar residues) spans 261–271 (SPQSLPRGSKA).

This sequence belongs to the MIP/aquaporin (TC 1.A.8) family. In terms of assembly, homotetramer. Ser-256 phosphorylation is necessary and sufficient for expression at the apical membrane. Endocytosis is not phosphorylation-dependent. Post-translationally, N-glycosylated.

Its subcellular location is the apical cell membrane. It localises to the basolateral cell membrane. The protein resides in the cell membrane. It is found in the cytoplasmic vesicle membrane. The protein localises to the golgi apparatus. Its subcellular location is the trans-Golgi network membrane. The catalysed reaction is H2O(in) = H2O(out). It catalyses the reaction glycerol(in) = glycerol(out). Forms a water-specific channel that provides the plasma membranes of renal collecting duct with high permeability to water, thereby permitting water to move in the direction of an osmotic gradient. Could also be permeable to glycerol. This is Aquaporin-2 from Bos taurus (Bovine).